The chain runs to 228 residues: Methyltransferase verB (228 aa).

Belongs to the methyltransferase superfamily.

The protein operates within secondary metabolite biosynthesis; terpenoid biosynthesis. Its pathway is mycotoxin biosynthesis. In terms of biological role, methyltransferase; part of the gene cluster that mediates the biosynthesis of the neurotoxin verrucosidin, a methylated alpha-pyrone polyketide that inhibits oxidative phosphorylation in mitochondria and thereby causes neurological diseases. The carbon backbone of verrucosidin is synthesized by the HR-PKS verA, and further modified by the other verrucodidin cluster enzymes. The polypeptide is Methyltransferase verB (Penicillium polonicum).